The sequence spans 397 residues: Carbamoyl phosphate synthase small chain (397 aa).

Positions 1–204 (MSPLLPSFPF…PAYRTLDTSK (204 aa)) are CPSase. L-glutamine is bound by residues S53, G256, and G258. The 188-residue stretch at 208–395 (KVVAYDFGVK…MELMNAAKKE (188 aa)) folds into the Glutamine amidotransferase type-1 domain. The Nucleophile role is filled by C284. 5 residues coordinate L-glutamine: L285, Q288, N326, G328, and F329. Active-site residues include H368 and E370.

This sequence belongs to the CarA family. In terms of assembly, composed of two chains; the small (or glutamine) chain promotes the hydrolysis of glutamine to ammonia, which is used by the large (or ammonia) chain to synthesize carbamoyl phosphate. Tetramer of heterodimers (alpha,beta)4.

The catalysed reaction is hydrogencarbonate + L-glutamine + 2 ATP + H2O = carbamoyl phosphate + L-glutamate + 2 ADP + phosphate + 2 H(+). It catalyses the reaction L-glutamine + H2O = L-glutamate + NH4(+). Its pathway is amino-acid biosynthesis; L-arginine biosynthesis; carbamoyl phosphate from bicarbonate: step 1/1. The protein operates within pyrimidine metabolism; UMP biosynthesis via de novo pathway; (S)-dihydroorotate from bicarbonate: step 1/3. Small subunit of the glutamine-dependent carbamoyl phosphate synthetase (CPSase). CPSase catalyzes the formation of carbamoyl phosphate from the ammonia moiety of glutamine, carbonate, and phosphate donated by ATP, constituting the first step of 2 biosynthetic pathways, one leading to arginine and/or urea and the other to pyrimidine nucleotides. The small subunit (glutamine amidotransferase) binds and cleaves glutamine to supply the large subunit with the substrate ammonia. This chain is Carbamoyl phosphate synthase small chain, found in Polynucleobacter asymbioticus (strain DSM 18221 / CIP 109841 / QLW-P1DMWA-1) (Polynucleobacter necessarius subsp. asymbioticus).